Consider the following 961-residue polypeptide: G protein-coupled receptor GPR1 (961 aa).

Over 1-56 the chain is Extracellular; sequence MITEGFPPNLNALKGSSLLEKRVDSLRQLNTTTVNQLLGLPGMTSTFTAPQLLQLR. The chain crosses the membrane as a helical span at residues 57-79; that stretch reads IIAITASAVSLIAGCLGMFFLSK. The Cytoplasmic portion of the chain corresponds to 80–91; that stretch reads MDKRRKVFRHDL. The helical transmembrane segment at 92–114 threads the bilayer; the sequence is IAFLIICDFLKAFILMIYPMIIL. Residues 115-133 are Extracellular-facing; sequence INNSVYATPAFFNTLGWFT. Residues 134-156 traverse the membrane as a helical segment; that stretch reads AFAIEGADMAIMIFAIHFAILIF. Residues 157–178 lie on the Cytoplasmic side of the membrane; that stretch reads KPNWKWRNKRSGNMEGGLYKKR. A helical membrane pass occupies residues 179 to 198; it reads SYIWPITALVPAILASLAFI. At 199–250 the chain is on the extracellular side; the sequence is NYNKLNDDSDTTIILDNNNYNFPDSPRQGGYKPWSAWCYLPPKPYWYKIVLS. Residues 251–273 form a helical membrane-spanning segment; the sequence is WGPRYFIIIFIFAVYLSIYIFIT. Residues 274 to 619 lie on the Cytoplasmic side of the membrane; that stretch reads SESKRIKAQI…KKRRAQIQKN (346 aa). Ser-373 is subject to Phosphoserine. A disordered region spans residues 468 to 568; that stretch reads AMYDNKNDNS…PADNIPTLSN (101 aa). Residues 502–558 are compositionally biased toward low complexity; it reads NNNNDNDNDNNNSNNNNNNNNNNNNNNNNNNNNNNNNNNNNNNSNNIKNNVDNNNTN. Residues 620 to 642 traverse the membrane as a helical segment; sequence LRAIFIYPLSYIGIWLFPIIADA. Residues 643 to 822 lie on the Extracellular side of the membrane; sequence LQYNHEIKHG…AMLNNITAEE (180 aa). Over residues 783–796 the composition is skewed to basic and acidic residues; the sequence is DSNDNKRTESDETK. Residues 783–805 are disordered; sequence DSNDNKRTESDETKTNSSDRSLP. A helical membrane pass occupies residues 823 to 843; that stretch reads VEVPLFWRIIHHIPMLGGIDL. The Cytoplasmic portion of the chain corresponds to 844–961; that stretch reads DELNRLLKIR…LIAFLRNGPL (118 aa). Phosphoserine is present on Ser-903.

The protein belongs to the G-protein coupled receptor GPR1/git3 family.

The protein resides in the cell membrane. In terms of biological role, seems to associate with GPA2 and act as G protein-coupled receptor that senses glucose and controls filamentous growth. It acts upstream of adenylate cyclase and is required for glucose activation of cAMP synthesis in concert with a glucose phosphorylation-dependent mechanism. The polypeptide is G protein-coupled receptor GPR1 (GPR1) (Saccharomyces cerevisiae (strain ATCC 204508 / S288c) (Baker's yeast)).